The following is a 321-amino-acid chain: Probable transaldolase (321 aa).

The Schiff-base intermediate with substrate role is filled by Lys-133.

Belongs to the transaldolase family. Type 1 subfamily. Homodimer.

It localises to the cytoplasm. The catalysed reaction is D-sedoheptulose 7-phosphate + D-glyceraldehyde 3-phosphate = D-erythrose 4-phosphate + beta-D-fructose 6-phosphate. It functions in the pathway carbohydrate degradation; pentose phosphate pathway; D-glyceraldehyde 3-phosphate and beta-D-fructose 6-phosphate from D-ribose 5-phosphate and D-xylulose 5-phosphate (non-oxidative stage): step 2/3. Its function is as follows. Transaldolase is important for the balance of metabolites in the pentose-phosphate pathway. The sequence is that of Probable transaldolase (tal) from Dictyostelium discoideum (Social amoeba).